The sequence spans 85 residues: Small ribosomal subunit protein bS16 (85 aa).

This sequence belongs to the bacterial ribosomal protein bS16 family.

The polypeptide is Small ribosomal subunit protein bS16 (Nitrosomonas eutropha (strain DSM 101675 / C91 / Nm57)).